Consider the following 317-residue polypeptide: Beta-ketoacyl-[acyl-carrier-protein] synthase III (317 aa).

Residues Cys-112 and His-244 contribute to the active site. Positions 245–249 (QANIR) are ACP-binding. Asn-274 is a catalytic residue.

The protein belongs to the thiolase-like superfamily. FabH family. Homodimer.

The protein localises to the cytoplasm. The catalysed reaction is malonyl-[ACP] + acetyl-CoA + H(+) = 3-oxobutanoyl-[ACP] + CO2 + CoA. Its pathway is lipid metabolism; fatty acid biosynthesis. Catalyzes the condensation reaction of fatty acid synthesis by the addition to an acyl acceptor of two carbons from malonyl-ACP. Catalyzes the first condensation reaction which initiates fatty acid synthesis and may therefore play a role in governing the total rate of fatty acid production. Possesses both acetoacetyl-ACP synthase and acetyl transacylase activities. Its substrate specificity determines the biosynthesis of branched-chain and/or straight-chain of fatty acids. The chain is Beta-ketoacyl-[acyl-carrier-protein] synthase III from Rickettsia massiliae (strain Mtu5).